The chain runs to 254 residues: Thiazole synthase (254 aa).

The active-site Schiff-base intermediate with DXP is Lys-96. Residues Gly-157, 183-184, and 205-206 each bind 1-deoxy-D-xylulose 5-phosphate; these read AG and NT.

Belongs to the ThiG family. Homotetramer. Forms heterodimers with either ThiH or ThiS.

It localises to the cytoplasm. It carries out the reaction [ThiS sulfur-carrier protein]-C-terminal-Gly-aminoethanethioate + 2-iminoacetate + 1-deoxy-D-xylulose 5-phosphate = [ThiS sulfur-carrier protein]-C-terminal Gly-Gly + 2-[(2R,5Z)-2-carboxy-4-methylthiazol-5(2H)-ylidene]ethyl phosphate + 2 H2O + H(+). It participates in cofactor biosynthesis; thiamine diphosphate biosynthesis. Catalyzes the rearrangement of 1-deoxy-D-xylulose 5-phosphate (DXP) to produce the thiazole phosphate moiety of thiamine. Sulfur is provided by the thiocarboxylate moiety of the carrier protein ThiS. In vitro, sulfur can be provided by H(2)S. In Clostridium kluyveri (strain ATCC 8527 / DSM 555 / NBRC 12016 / NCIMB 10680 / K1), this protein is Thiazole synthase.